Here is an 85-residue protein sequence, read N- to C-terminus: MIPAVVLLLLLLVEQAAALGEPQLCYILDAILFLYGIVLTLLYCRLKLQVRKAATASEKSDGIYTGLSTRTQETYETLKHEKPPQ.

The N-terminal stretch at methionine 1–alanine 18 is a signal peptide. The Extracellular segment spans residues leucine 19–glutamine 23. Residues leucine 24–cysteine 44 form a helical membrane-spanning segment. Residues arginine 45–glutamine 85 are Cytoplasmic-facing. Residues alanine 53–glutamate 81 form the ITAM domain. At tyrosine 64 the chain carries Phosphotyrosine. Serine 68 is subject to Phosphoserine. At tyrosine 75 the chain carries Phosphotyrosine. Threonine 77 carries the post-translational modification Phosphothreonine.

Belongs to the CD3Z/FCER1G family. In terms of assembly, igE Fc receptor is a tetramer of an alpha chain, a beta chain, and two disulfide linked gamma chains. Associates with FCGR1A; forms a functional signaling complex. The signaling subunit of immunoglobulin gamma (IgG) Fc receptor complex. As a homodimer or a heterodimer of CD247 and FCER1G, associates with the ligand binding subunit FCGR3A to form a functional receptor complex. Associates with CLEC6A. Interacts with CLEC4E. Interacts (via ITAM domain) with SYK (via SH2 domains); activates SYK, enabling integrin-mediated activation of neutrophils and macrophages. Interacts with CSF2RB and recruits SYK in response to IL3 stimulation; this interaction is direct. Interacts with CD300LH; the interaction may be indirect. Interacts with CD300LD. Interacts with TARM1.

Its subcellular location is the cell membrane. In terms of biological role, adapter protein containing an immunoreceptor tyrosine-based activation motif (ITAM) that transduces activation signals from various immunoreceptors. As a component of the high-affinity immunoglobulin E (IgE) receptor, mediates allergic inflammatory signaling in mast cells. As a constitutive component of interleukin-3 receptor complex, selectively mediates interleukin 4/IL4 production by basophils priming T-cells toward effector T-helper 2 subset. Associates with pattern recognition receptors CLEC4D and CLEC4E to form a functional signaling complex in myeloid cells. Binding of mycobacterial trehalose 6,6'-dimycolate (TDM) to this receptor complex leads to phosphorylation of ITAM, triggering activation of SYK, CARD9 and NF-kappa-B, consequently driving maturation of antigen-presenting cells and shaping antigen-specific priming of T-cells toward effector T-helper 1 and T-helper 17 cell subtypes. May function cooperatively with other activating receptors. Functionally linked to integrin beta-2/ITGB2-mediated neutrophil activation. Also involved in integrin alpha-2/ITGA2-mediated platelet activation. The sequence is that of High affinity immunoglobulin epsilon receptor subunit gamma (FCER1G) from Bos taurus (Bovine).